We begin with the raw amino-acid sequence, 391 residues long: uncharacterized protein (391 aa).

This is an uncharacterized protein from Sinorhizobium fredii (strain NBRC 101917 / NGR234).